Reading from the N-terminus, the 498-residue chain is Guanosine-5'-triphosphate,3'-diphosphate pyrophosphatase (498 aa).

Belongs to the GppA/Ppx family. GppA subfamily.

It catalyses the reaction guanosine 3'-diphosphate 5'-triphosphate + H2O = guanosine 3',5'-bis(diphosphate) + phosphate + H(+). It participates in purine metabolism; ppGpp biosynthesis; ppGpp from GTP: step 2/2. In terms of biological role, catalyzes the conversion of pppGpp to ppGpp. Guanosine pentaphosphate (pppGpp) is a cytoplasmic signaling molecule which together with ppGpp controls the 'stringent response', an adaptive process that allows bacteria to respond to amino acid starvation, resulting in the coordinated regulation of numerous cellular activities. The sequence is that of Guanosine-5'-triphosphate,3'-diphosphate pyrophosphatase from Pectobacterium atrosepticum (strain SCRI 1043 / ATCC BAA-672) (Erwinia carotovora subsp. atroseptica).